Here is a 332-residue protein sequence, read N- to C-terminus: Apoptosis-enhancing nuclease (332 aa).

Positions 1 to 102 (MVPREVPESS…VPREAPSSGP (102 aa)) are disordered. The segment covering 20 to 36 (ARRRHKRRSRQHQRFMA) has biased composition (basic residues). A Nucleolar localization signal motif is present at residues 21–29 (RRRHKRRSR). Residues 63-73 (QTPAGTEASGN) show a composition bias toward polar residues. One can recognise an Exonuclease domain in the interval 105 to 261 (YVAIDCEMVG…EDAMTAMELY (157 aa)). The Nuclear localization signal signature appears at 160–183 (RQHMHKAIPFQVAQKEILKLLKGK). The interval 272-332 (VASTAKAHPE…EGQGARSAPP (61 aa)) is disordered. The span at 310 to 321 (GDTREAQDRQEG) shows a compositional bias: basic and acidic residues.

The protein resides in the nucleus. It is found in the nucleolus. In terms of biological role, exonuclease with activity against single- and double-stranded DNA and RNA. Mediates p53-induced apoptosis. When induced by p53 following DNA damage, digests double-stranded DNA to form single-stranded DNA and amplifies DNA damage signals, leading to enhancement of apoptosis. In Rattus norvegicus (Rat), this protein is Apoptosis-enhancing nuclease.